The primary structure comprises 123 residues: Large ribosomal subunit protein uL14 (123 aa).

Belongs to the universal ribosomal protein uL14 family. As to quaternary structure, part of the 50S ribosomal subunit. Forms a cluster with proteins L3 and L19. In the 70S ribosome, L14 and L19 interact and together make contacts with the 16S rRNA in bridges B5 and B8.

Functionally, binds to 23S rRNA. Forms part of two intersubunit bridges in the 70S ribosome. This is Large ribosomal subunit protein uL14 from Vibrio parahaemolyticus serotype O3:K6 (strain RIMD 2210633).